A 335-amino-acid chain; its full sequence is uncharacterized protein (335 aa).

Positions 1–21 are cleaved as a signal peptide; that stretch reads MDKKARAHTVIVCLVGALSLA. Residue Cys22 is the site of N-palmitoyl cysteine attachment. Residue Cys22 is the site of S-diacylglycerol cysteine attachment.

It localises to the cell membrane. This is an uncharacterized protein from Treponema pallidum (strain Nichols).